The chain runs to 740 residues: Dynein regulatory complex protein 1 (740 aa).

Positions 101 to 388 form a coiled coil; it reads IDIREIHRRV…QFKELQKAMR (288 aa). A disordered region spans residues 570 to 617; the sequence is ASMEKASMEETSTRSELELAEQTEMEGEKEESLVEGEKEEEEETPPSP. The span at 575-586 shows a compositional bias: basic and acidic residues; the sequence is ASMEETSTRSEL. Over residues 587 to 598 the composition is skewed to acidic residues; that stretch reads ELAEQTEMEGEK. Positions 691–724 form a coiled coil; it reads LTQRAKLLLENSSLEQQNTELQALLQQYLNSKIN.

This sequence belongs to the DRC1 family. In terms of assembly, component of the nexin-dynein regulatory complex (N-DRC). Interacts with CCDC65/DRC2, DRC3, GAS8/DRC4 and TCTE1/DRC5.

The protein localises to the cytoplasm. It is found in the cytoskeleton. Its subcellular location is the cilium axoneme. The protein resides in the flagellum axoneme. Functionally, component of the nexin-dynein regulatory complex (N-DRC) a key regulator of ciliary/flagellar motility which maintains the alignment and integrity of the distal axoneme and regulates microtubule sliding in motile axonemes. Plays a critical role in the assembly of N-DRC and also stabilizes the assembly of multiple inner dynein arms and radial spokes. Coassembles with CCDC65/DRC2 to form a central scaffold needed for assembly of the N-DRC and its attachment to the outer doublet microtubules. This Homo sapiens (Human) protein is Dynein regulatory complex protein 1 (DRC1).